Consider the following 390-residue polypeptide: Uroporphyrinogen decarboxylase 2, chloroplastic (390 aa).

The N-terminal 30 residues, 1-30 (MATACPPLSLQPAYLSGRSARARRPPPAVR), are a transit peptide targeting the chloroplast. Substrate contacts are provided by residues 70–74 (RQAGR), phenylalanine 89, serine 119, aspartate 120, tyrosine 197, serine 252, and histidine 367.

This sequence belongs to the uroporphyrinogen decarboxylase family. As to quaternary structure, homodimer.

The protein localises to the plastid. The protein resides in the chloroplast. It catalyses the reaction uroporphyrinogen III + 4 H(+) = coproporphyrinogen III + 4 CO2. It functions in the pathway porphyrin-containing compound metabolism; protoporphyrin-IX biosynthesis; coproporphyrinogen-III from 5-aminolevulinate: step 4/4. Catalyzes the decarboxylation of four acetate groups of uroporphyrinogen-III to yield coproporphyrinogen-III. This chain is Uroporphyrinogen decarboxylase 2, chloroplastic, found in Oryza sativa subsp. japonica (Rice).